The chain runs to 97 residues: Carboxypeptidase inhibitor (97 aa).

An N-terminal signal peptide occupies residues 1 to 22; it reads MAATLPVFAVVFFAMVLASSQA.

The protein localises to the secreted. In terms of biological role, potent competitive inhibitor of metallo-carboxypeptidases CPA1, CPA2, CPB, CPN, and TAF1a. Also inhibits human CPA4. Accelerates fibrinolysis in vitro and may contribute to the maintenance of host blood liquidity during feeding. This Rhipicephalus bursa (Tick) protein is Carboxypeptidase inhibitor.